The following is a 176-amino-acid chain: NAD(P)H-quinone oxidoreductase subunit 6, chloroplastic (176 aa).

5 helical membrane passes run 10–30 (FLLV…VLLA), 33–53 (IYSA…YILA), 61–81 (AQLL…VMFI), 92–112 (LWTV…VSLI), and 152–172 (FFLP…GAIA).

The protein belongs to the complex I subunit 6 family. In terms of assembly, NDH is composed of at least 16 different subunits, 5 of which are encoded in the nucleus.

Its subcellular location is the plastid. It is found in the chloroplast thylakoid membrane. It catalyses the reaction a plastoquinone + NADH + (n+1) H(+)(in) = a plastoquinol + NAD(+) + n H(+)(out). The catalysed reaction is a plastoquinone + NADPH + (n+1) H(+)(in) = a plastoquinol + NADP(+) + n H(+)(out). Its function is as follows. NDH shuttles electrons from NAD(P)H:plastoquinone, via FMN and iron-sulfur (Fe-S) centers, to quinones in the photosynthetic chain and possibly in a chloroplast respiratory chain. The immediate electron acceptor for the enzyme in this species is believed to be plastoquinone. Couples the redox reaction to proton translocation, and thus conserves the redox energy in a proton gradient. In Guizotia abyssinica (Niger), this protein is NAD(P)H-quinone oxidoreductase subunit 6, chloroplastic (ndhG).